Reading from the N-terminus, the 319-residue chain is GTP cyclohydrolase MptA (319 aa).

This sequence belongs to the GTP cyclohydrolase IV family. Homodimer. Fe(2+) serves as cofactor.

The catalysed reaction is GTP + H2O = 7,8-dihydroneopterin 2',3'-cyclic phosphate + formate + diphosphate + H(+). It participates in cofactor biosynthesis; 5,6,7,8-tetrahydromethanopterin biosynthesis. In terms of biological role, converts GTP to 7,8-dihydro-D-neopterin 2',3'-cyclic phosphate, the first intermediate in the biosynthesis of coenzyme methanopterin. The polypeptide is GTP cyclohydrolase MptA (Methanosarcina barkeri (strain Fusaro / DSM 804)).